A 522-amino-acid chain; its full sequence is Maturase K (522 aa).

The protein belongs to the intron maturase 2 family. MatK subfamily.

It is found in the plastid. The protein localises to the chloroplast. Functionally, usually encoded in the trnK tRNA gene intron. Probably assists in splicing its own and other chloroplast group II introns. In Iris domestica (Leopard lily), this protein is Maturase K.